The primary structure comprises 262 residues: Taurine import ATP-binding protein TauB (262 aa).

An ABC transporter domain is found at 4–233 (LELERISAQY…RYAAGESARA (230 aa)). ATP is bound at residue 38–45 (GPSGSGKT).

The protein belongs to the ABC transporter superfamily. Taurine importer (TC 3.A.1.17.1) family. The complex is composed of two ATP-binding proteins (TauB), two transmembrane proteins (TauC) and a solute-binding protein (TauA).

The protein localises to the cell inner membrane. It catalyses the reaction taurine(out) + ATP + H2O = taurine(in) + ADP + phosphate + H(+). Part of the ABC transporter complex TauABC involved in taurine import. Responsible for energy coupling to the transport system. This is Taurine import ATP-binding protein TauB from Pseudomonas putida (Arthrobacter siderocapsulatus).